The sequence spans 466 residues: Pentatricopeptide repeat-containing protein At4g01400, mitochondrial (466 aa).

The transit peptide at 1–34 (MIRRPIYDFAAVFRHLTSPLSTSSRFLFYSSSEH) directs the protein to the mitochondrion. PPR repeat units follow at residues 118-152 (TGEIFTYLIKVYAEAKLPEKVLSTFYKMLEFNFTP), 153-188 (QPKHLNRILDVLVSHRGYLQKAFELFKSSRLHGVMP), 189-223 (NTRSYNLLMQAFCLNDDLSIAYQLFGKMLERDVVP), 224-258 (DVDSYKILIQGFCRKGQVNGAMELLDDMLNKGFVP), 259-293 (DRLSYTTLLNSLCRKTQLREAYKLLCRMKLKGCNP), 294-328 (DLVHYNTMILGFCREDRAMDARKVLDDMLSNGCSP), 329-363 (NSVSYRTLIGGLCDQGMFDEGKKYLEEMISKGFSP), and 364-398 (HFSVSNCLVKGFCSFGKVEEACDVVEVVMKNGETL).

This sequence belongs to the PPR family. P subfamily.

The protein localises to the mitochondrion. The protein is Pentatricopeptide repeat-containing protein At4g01400, mitochondrial of Arabidopsis thaliana (Mouse-ear cress).